Here is a 172-residue protein sequence, read N- to C-terminus: Signal peptidase complex catalytic subunit SEC11 (172 aa).

The Cytoplasmic portion of the chain corresponds to 1 to 14; it reads MLSSLQNPRQAAAQ. The helical; Signal-anchor for type II membrane protein transmembrane segment at 15 to 35 threads the bilayer; the sequence is LMNFAMILSTAFMMWKGLSVA. The Lumenal segment spans residues 36 to 172; that stretch reads TDSPSPIVVV…MGLLVVIQRE (137 aa). Catalysis depends on charge relay system residues Ser-49, His-90, and Asp-115. The interval 158-169 is C-terminal short (CTS) helix; the sequence is VMLGIMGLLVVI.

It belongs to the peptidase S26B family. In terms of assembly, component of the signal peptidase complex (SPC) composed of a catalytic subunit SEC11 and three accessory subunits SPC1, SPC2 and SPC3. The complex induces a local thinning of the ER membrane which is used to measure the length of the signal peptide (SP) h-region of protein substrates. This ensures the selectivity of the complex towards h-regions shorter than 18-20 amino acids. SPC associates with the translocon complex.

It localises to the endoplasmic reticulum membrane. It catalyses the reaction Cleavage of hydrophobic, N-terminal signal or leader sequences from secreted and periplasmic proteins.. Functionally, catalytic component of the signal peptidase complex (SPC) which catalyzes the cleavage of N-terminal signal sequences from nascent proteins as they are translocated into the lumen of the endoplasmic reticulum. Specifically cleaves N-terminal signal peptides that contain a hydrophobic alpha-helix (h-region) shorter than 18-20 amino acids. This Metarhizium robertsii (strain ARSEF 23 / ATCC MYA-3075) (Metarhizium anisopliae (strain ARSEF 23)) protein is Signal peptidase complex catalytic subunit SEC11 (SEC11).